A 381-amino-acid polypeptide reads, in one-letter code: E3 ubiquitin-protein ligase At1g63170 (381 aa).

Residues 1–23 (MSRETTTEATPLILTDGGGGRRS) form a disordered region. 2 helical membrane-spanning segments follow: residues 74–94 (VVVL…AVLV) and 107–127 (VWII…CVEY). The disordered stretch occupies residues 135-161 (RRDLSPRSSSSSSSSSSSMDEEEGLGL). A compositionally biased stretch (low complexity) spans 140-152 (PRSSSSSSSSSSS). A coiled-coil region spans residues 170-194 (LELGQLENENNSFAKHLESANTMIS). 3 consecutive transmembrane segments (helical) span residues 189-209 (ANTM…SSGG), 224-244 (IVFL…ACVI), and 245-265 (GIAV…VAEQ). Residues 325 to 366 (CCICLSAYEDETELRELPCGHHFHCGCVDKWLYINATCPLCK) form an RING-type; atypical zinc finger.

It is found in the membrane. It carries out the reaction S-ubiquitinyl-[E2 ubiquitin-conjugating enzyme]-L-cysteine + [acceptor protein]-L-lysine = [E2 ubiquitin-conjugating enzyme]-L-cysteine + N(6)-ubiquitinyl-[acceptor protein]-L-lysine.. Its pathway is protein modification; protein ubiquitination. Its function is as follows. Mediates E2-dependent protein ubiquitination. This Arabidopsis thaliana (Mouse-ear cress) protein is E3 ubiquitin-protein ligase At1g63170.